Consider the following 38-residue polypeptide: Large ribosomal subunit protein bL36 (38 aa).

This sequence belongs to the bacterial ribosomal protein bL36 family.

The chain is Large ribosomal subunit protein bL36 from Karelsulcia muelleri (strain GWSS) (Sulcia muelleri).